The following is a 384-amino-acid chain: Zinc metalloproteinase nas-12 (384 aa).

The first 25 residues, Met1 to Ala25, serve as a signal peptide directing secretion. A Peptidase M12A domain is found at Val73–Gly271. Disulfide bonds link Cys116-Cys270, Cys137-Cys156, Cys287-Cys325, Cys296-Cys318, and Cys305-Cys322. His164 is a binding site for Zn(2+). Glu165 is an active-site residue. Positions 168 and 174 each coordinate Zn(2+). The region spanning Cys287–Cys325 is the ShKT 1 domain. Residue Asn340 is glycosylated (N-linked (GlcNAc...) asparagine). Intrachain disulfides connect Cys348-Cys384, Cys355-Cys377, and Cys364-Cys381. Positions Cys348 to Cys384 constitute a ShKT 2 domain.

It depends on Zn(2+) as a cofactor. Expressed in pharyngeal glands.

The protein localises to the secreted. In terms of biological role, metalloprotease. This is Zinc metalloproteinase nas-12 (nas-12) from Caenorhabditis elegans.